Here is a 345-residue protein sequence, read N- to C-terminus: Methylthioribose-1-phosphate isomerase (345 aa).

Residues 47–49, R90, and Q197 contribute to the substrate site; that span reads RGA. Residue D238 is the Proton donor of the active site. 248–249 lines the substrate pocket; the sequence is NK.

Belongs to the eIF-2B alpha/beta/delta subunits family. MtnA subfamily.

It carries out the reaction 5-(methylsulfanyl)-alpha-D-ribose 1-phosphate = 5-(methylsulfanyl)-D-ribulose 1-phosphate. It functions in the pathway amino-acid biosynthesis; L-methionine biosynthesis via salvage pathway; L-methionine from S-methyl-5-thio-alpha-D-ribose 1-phosphate: step 1/6. Catalyzes the interconversion of methylthioribose-1-phosphate (MTR-1-P) into methylthioribulose-1-phosphate (MTRu-1-P). This Caldanaerobacter subterraneus subsp. tengcongensis (strain DSM 15242 / JCM 11007 / NBRC 100824 / MB4) (Thermoanaerobacter tengcongensis) protein is Methylthioribose-1-phosphate isomerase.